The primary structure comprises 150 residues: Plasmin C (150 aa).

An N-terminal signal peptide occupies residues 1–14 (MRSFFLLCALVAVC).

The sequence is that of Plasmin C (PLSC) from Physarum polycephalum (Slime mold).